We begin with the raw amino-acid sequence, 315 residues long: MLRRALEEKYALKIGEIRTTTAVICSISTDTILDFEKQCLKPHCTFSKPIINLGYTYYDIPSEYKEELNESIAVNHRIDAYALITTFDETPIESIEPLISNDKSEIKWTFLLDWTELHQGTWLRFLSKQFESLESKGYDLKNENISVWCMNSDYMFELQKNDILWESFHFEYLQQSLRSVLFYRNGSLIYVDKKRNQLPLFEIFVKLCLHNRNDKYKSLNQFTEMSETSQVFIPFNSDSEDLIKTIDEEFQPEEVLKPDFMPTFEKVIPYSKPKDEPHLPPIGELPHFDMNKELEEAAIILKQASKKEAYAKQNI.

The protein belongs to the dynein light intermediate chain DYN3 family. As to quaternary structure, the cytoplasmic dynein is composed of at least two heavy chains and a number of intermediate and light chains.

The protein localises to the cytoplasm. It is found in the cytoskeleton. In terms of biological role, component of the cytoplasmic dynein which acts as a motor for the intracellular retrograde motility of vesicles and organelles along microtubules. May play an important role in the proper orientation of the mitotic spindle into the budding daughter cell yeast. Probably required for normal progression of the cell cycle. The sequence is that of Cytoplasmic dynein intermediate light chain DYN3 (DYN3) from Candida glabrata (strain ATCC 2001 / BCRC 20586 / JCM 3761 / NBRC 0622 / NRRL Y-65 / CBS 138) (Yeast).